A 284-amino-acid polypeptide reads, in one-letter code: Putative ABC transporter ATP-binding protein MG468.1 homolog (284 aa).

The 232-residue stretch at 53–284 folds into the ABC transporter domain; the sequence is VLFKGVCKAV…PKTINEINWV (232 aa). 89–96 lines the ATP pocket; the sequence is GKSGSGKT.

Belongs to the ABC transporter superfamily.

This Mycoplasma pneumoniae (strain ATCC 29342 / M129 / Subtype 1) (Mycoplasmoides pneumoniae) protein is Putative ABC transporter ATP-binding protein MG468.1 homolog.